The following is a 290-amino-acid chain: MLEDKGELSIKEVLKCLPISEKSPANWAAWCFGLILVVLILIVTGYMFVVYLRSQRKKNQLADETGGIEIENSIRDPVVINNSLASRSCSENKVKKQSPESTEQDDFSKTTVDETIKEKSEKQPKTCAQKPKVPIPKASTPKTEKLVSKEPSTEELSVKNSLTDLKNEATKMANTSSSANRTGEISVEIVSPKPTTAVQASTPEKPMSSAESAMESSIGSDISTYIVSSKRSEVNNYNMIEAGRTPPMSFSESYAQTAIPTANTPPTVVHVSKPSSETSVSIPPSSAVKK.

Disordered stretches follow at residues 89–157 (CSEN…EELS), 172–217 (MANT…MESS), and 261–290 (TANT…AVKK). Composition is skewed to basic and acidic residues over residues 106-124 (DFSK…EKQP) and 142-152 (KTEKLVSKEPS). Composition is skewed to polar residues over residues 172–183 (MANTSSSANRTG) and 193–202 (KPTTAVQAST). Composition is skewed to low complexity over residues 207-217 (MSSAESAMESS) and 274-290 (PSSE…AVKK).

This is an uncharacterized protein from Caenorhabditis elegans.